The chain runs to 384 residues: Bifunctional enzyme IspD/IspF (384 aa).

2-C-methyl-D-erythritol 4-phosphate cytidylyltransferase regions lie at residues 1–227 (MAKV…EGEQ) and 1–228 (MAKV…GEQR). The segment at 228–384 (RIGSGFDVHR…QATALITLPF (157 aa)) is 2-C-methyl-D-erythritol 2,4-cyclodiphosphate synthase. A divalent metal cation contacts are provided by D234 and H236. 4-CDP-2-C-methyl-D-erythritol 2-phosphate-binding positions include 234 to 236 (DVH) and 260 to 261 (HS). Residue H268 participates in a divalent metal cation binding. Residues 282 to 284 (DIG), 358 to 361 (TTTE), F365, and R368 contribute to the 4-CDP-2-C-methyl-D-erythritol 2-phosphate site.

The protein in the N-terminal section; belongs to the IspD/TarI cytidylyltransferase family. IspD subfamily. In the C-terminal section; belongs to the IspF family. It depends on a divalent metal cation as a cofactor.

The enzyme catalyses 2-C-methyl-D-erythritol 4-phosphate + CTP + H(+) = 4-CDP-2-C-methyl-D-erythritol + diphosphate. The catalysed reaction is 4-CDP-2-C-methyl-D-erythritol 2-phosphate = 2-C-methyl-D-erythritol 2,4-cyclic diphosphate + CMP. It participates in isoprenoid biosynthesis; isopentenyl diphosphate biosynthesis via DXP pathway; isopentenyl diphosphate from 1-deoxy-D-xylulose 5-phosphate: step 2/6. It functions in the pathway isoprenoid biosynthesis; isopentenyl diphosphate biosynthesis via DXP pathway; isopentenyl diphosphate from 1-deoxy-D-xylulose 5-phosphate: step 4/6. Functionally, bifunctional enzyme that catalyzes the formation of 4-diphosphocytidyl-2-C-methyl-D-erythritol from CTP and 2-C-methyl-D-erythritol 4-phosphate (MEP) (IspD), and catalyzes the conversion of 4-diphosphocytidyl-2-C-methyl-D-erythritol 2-phosphate (CDP-ME2P) to 2-C-methyl-D-erythritol 2,4-cyclodiphosphate (ME-CPP) with a corresponding release of cytidine 5-monophosphate (CMP) (IspF). The polypeptide is Bifunctional enzyme IspD/IspF (Rhodospirillum rubrum (strain ATCC 11170 / ATH 1.1.1 / DSM 467 / LMG 4362 / NCIMB 8255 / S1)).